The primary structure comprises 551 residues: Arginine--tRNA ligase (551 aa).

The 'HIGH' region motif lies at 123–133 (ANPTGPLTIGR).

This sequence belongs to the class-I aminoacyl-tRNA synthetase family. In terms of assembly, monomer.

The protein localises to the cytoplasm. It catalyses the reaction tRNA(Arg) + L-arginine + ATP = L-arginyl-tRNA(Arg) + AMP + diphosphate. This Chlorobaculum tepidum (strain ATCC 49652 / DSM 12025 / NBRC 103806 / TLS) (Chlorobium tepidum) protein is Arginine--tRNA ligase.